Here is a 232-residue protein sequence, read N- to C-terminus: Ashwin (232 aa).

Phosphoserine occurs at positions 112, 182, 184, 189, and 193. Residues 163–232 form a disordered region; the sequence is KMEHNNNDTQ…KRKIQHVTWP (70 aa). Residues threonine 197 and threonine 198 each carry the phosphothreonine modification. Residues 206-224 are compositionally biased toward basic and acidic residues; sequence APKEEAEATNHLKPPEVKR.

The protein belongs to the ashwin family. As to quaternary structure, component of the tRNA-splicing ligase complex.

The protein localises to the nucleus. The chain is Ashwin from Mus musculus (Mouse).